The chain runs to 519 residues: Iroquois-class homeodomain protein IRX-4 (519 aa).

Residues 143 to 204 (GTRRKNATRE…NARRRLKKEN (62 aa)) constitute a DNA-binding region (homeobox; TALE-type). The tract at residues 204 to 298 (NKMTWPPRNK…VPAAPDGPVK (95 aa)) is disordered. Residues 213–222 (KCADEKRPYA) are compositionally biased toward basic and acidic residues. Composition is skewed to acidic residues over residues 223–235 (EGEE…EEAR) and 257–267 (LSDLDDFDPLE).

It belongs to the TALE/IRO homeobox family. As to quaternary structure, interacts with the vitamin D receptor VDR but doesn't affect its transactivation activity. Predominantly expressed in cardiac ventricles.

The protein resides in the nucleus. Its function is as follows. Likely to be an important mediator of ventricular differentiation during cardiac development. This Homo sapiens (Human) protein is Iroquois-class homeodomain protein IRX-4 (IRX4).